The chain runs to 202 residues: uncharacterized protein (202 aa).

Positions aspartate 164 to glutamate 202 are disordered. Over residues threonine 165–glutamate 202 the composition is skewed to acidic residues.

This is an uncharacterized protein from Acanthamoeba polyphaga mimivirus (APMV).